The following is a 1041-amino-acid chain: Desmoglein-4 (1041 aa).

Positions 1–23 (MDWLLFRNICLLILFMVVLGVNS) are cleaved as a signal peptide. Positions 24–49 (EFIVEVKELDIENGTTTWQTVRRQKR) are excised as a propeptide. 4 consecutive Cadherin domains span residues 50 to 157 (EWIK…PPVF), 158 to 269 (TQNV…FPIL), 270 to 385 (EKTS…GPTF), and 389 to 497 (SMTF…CPVI). The Extracellular portion of the chain corresponds to 50–634 (EWIKFAAACR…RQSNVGLGPA (585 aa)). N110 is a glycosylation site (N-linked (GlcNAc...) asparagine). N545 carries N-linked (GlcNAc...) asparagine glycosylation. A helical membrane pass occupies residues 635–655 (GIGMIILGLLLLLLSPLLLLM). The Cytoplasmic portion of the chain corresponds to 656–1041 (CCCKRRQPEG…RYSNMHYSRQ (386 aa)). 2 Desmoglein repeat repeats span residues 884-910 (TLSE…IVTE) and 911-941 (TYTT…ETVM). The disordered stretch occupies residues 1014–1041 (ISQTTGSTSPMTSQHRVTRYSNMHYSRQ).

As to quaternary structure, interacts with JUP. In terms of tissue distribution, strongly expressed in the skin; during the anagen stage of hair follicles in the matrix, precortex and inner rooth sheath.

The protein localises to the cell membrane. It is found in the cell junction. The protein resides in the desmosome. A component of desmosome cell-cell junctions which are required for positive regulation of cellular adhesion. Coordinates the transition from proliferation to differentiation in hair follicle keratinocytes. Plays a role in moderating lymphocyte migration to inflamed skin and maintaining homeostasis of the epidermal inflammatory response. The protein is Desmoglein-4 (Dsg4) of Mus musculus (Mouse).